Consider the following 321-residue polypeptide: Anthranilate phosphoribosyltransferase (321 aa).

Residues Gly72, 75-76 (GD), Thr80, 82-85 (NVST), 99-107 (KHGNVSITS), and Ser111 each bind 5-phospho-alpha-D-ribose 1-diphosphate. Position 72 (Gly72) interacts with anthranilate. Ser84 serves as a coordination point for Mg(2+). Residue Asn102 coordinates anthranilate. Anthranilate is bound at residue Arg157. Positions 216 and 217 each coordinate Mg(2+).

It belongs to the anthranilate phosphoribosyltransferase family. As to quaternary structure, homodimer. It depends on Mg(2+) as a cofactor.

It carries out the reaction N-(5-phospho-beta-D-ribosyl)anthranilate + diphosphate = 5-phospho-alpha-D-ribose 1-diphosphate + anthranilate. It functions in the pathway amino-acid biosynthesis; L-tryptophan biosynthesis; L-tryptophan from chorismate: step 2/5. Its function is as follows. Catalyzes the transfer of the phosphoribosyl group of 5-phosphorylribose-1-pyrophosphate (PRPP) to anthranilate to yield N-(5'-phosphoribosyl)-anthranilate (PRA). The chain is Anthranilate phosphoribosyltransferase from Methanococcus maripaludis (strain C6 / ATCC BAA-1332).